A 139-amino-acid chain; its full sequence is Large ribosomal subunit protein bL17 (139 aa).

This sequence belongs to the bacterial ribosomal protein bL17 family. Part of the 50S ribosomal subunit. Contacts protein L32.

This chain is Large ribosomal subunit protein bL17, found in Azorhizobium caulinodans (strain ATCC 43989 / DSM 5975 / JCM 20966 / LMG 6465 / NBRC 14845 / NCIMB 13405 / ORS 571).